The chain runs to 520 residues: CUGBP Elav-like family member 4 (520 aa).

RRM domains are found at residues 47 to 128, 135 to 215, and 435 to 513; these read IKLF…PADS, RKLF…FADT, and CNLF…LKRP.

The protein belongs to the CELF/BRUNOL family.

It localises to the nucleus. The protein resides in the cytoplasm. RNA-binding protein that may be implicated in the regulation of pre-mRNA alternative splicing. The chain is CUGBP Elav-like family member 4 (celf4) from Danio rerio (Zebrafish).